The chain runs to 462 residues: NAD-capped RNA hydrolase NUDT12 (462 aa).

The residue at position 10 (lysine 10) is an N6-succinyllysine. ANK repeat units lie at residues glutamate 11–asparagine 40, asparagine 45–leucine 74, and alanine 78–leucine 98. Lysine 185 carries the N6-succinyllysine modification. Residues cysteine 284 and cysteine 287 each contribute to the Zn(2+) site. Lysine 292 is modified (N6-succinyllysine). 2 residues coordinate Zn(2+): cysteine 302 and cysteine 307. Substrate contacts are provided by residues tyrosine 318, alanine 354–phenylalanine 356, glutamate 370, glutamate 374, and glutamate 415. Positions proline 319 to lysine 453 constitute a Nudix hydrolase domain. Mg(2+) is bound by residues alanine 354, glutamate 370, glutamate 374, and glutamate 415. Residues glycine 355–glycine 376 carry the Nudix box motif. Residues proline 460–leucine 462 carry the Microbody targeting signal motif.

Belongs to the Nudix hydrolase family. NudC subfamily. As to quaternary structure, homodimer. Homodimerization is essential for its catalytic activity and protein stability. Interacts (via ANK repeats) with BLMH. Mg(2+) is required as a cofactor. The cofactor is Zn(2+). Expressed abundantly in the liver and kidney.

The protein resides in the cytoplasm. The protein localises to the peroxisome. It localises to the cytoplasmic granule. The enzyme catalyses a 5'-end NAD(+)-phospho-ribonucleoside in mRNA + H2O = a 5'-end phospho-adenosine-phospho-ribonucleoside in mRNA + beta-nicotinamide D-ribonucleotide + 2 H(+). The catalysed reaction is NAD(+) + H2O = beta-nicotinamide D-ribonucleotide + AMP + 2 H(+). It carries out the reaction NADH + H2O = reduced beta-nicotinamide D-ribonucleotide + AMP + 2 H(+). It catalyses the reaction NADPH + H2O = reduced beta-nicotinamide D-ribonucleotide + adenosine 2',5'-bisphosphate + 2 H(+). Functionally, mRNA decapping enzyme that specifically removes the nicotinamide adenine dinucleotide (NAD) cap from a subset of mRNAs by hydrolyzing the diphosphate linkage to produce nicotinamide mononucleotide (NMN) and 5' monophosphate mRNA. The NAD-cap is present at the 5'-end of some RNAs; in contrast to the canonical N7 methylguanosine (m7G) cap, the NAD cap promotes mRNA decay. Preferentially acts on NAD-capped transcripts in response to nutrient stress. Also acts on free nicotinamide adenine dinucleotide molecules: hydrolyzes NAD(H) into NMN(H) and AMP, and NADPH into NMNH and 2',5'-ADP. May act to regulate the concentration of peroxisomal nicotinamide nucleotide cofactors required for oxidative metabolism in this organelle. Regulates the levels of circadian clock components PER1, PER2, PER3 and CRY2 in the liver. The polypeptide is NAD-capped RNA hydrolase NUDT12 (Mus musculus (Mouse)).